The primary structure comprises 213 residues: Probable GTP-binding protein EngB (213 aa).

Residues 30–204 (EGFEVAFAGR…YTALAGWMEL (175 aa)) form the EngB-type G domain. GTP contacts are provided by residues 38–45 (GRSNAGKS), 64–68 (GRTQL), 82–85 (DLPG), 149–152 (TKAD), and 182–185 (LFSA). 2 residues coordinate Mg(2+): Ser-45 and Thr-66.

The protein belongs to the TRAFAC class TrmE-Era-EngA-EngB-Septin-like GTPase superfamily. EngB GTPase family. Requires Mg(2+) as cofactor.

Functionally, necessary for normal cell division and for the maintenance of normal septation. The protein is Probable GTP-binding protein EngB of Pseudomonas fluorescens (strain SBW25).